The sequence spans 208 residues: U11/U12 small nuclear ribonucleoprotein 35 kDa protein (208 aa).

The RRM domain occupies 50-128 (LTLFVARLNP…YELLVDVEQE (79 aa)). Residues 133–208 (GWRPRRLGGG…TEDRTHRHTY (76 aa)) form a disordered region. The span at 171–208 (RPAEPRGRETERERDRRDYRDRRHERTHTEDRTHRHTY) shows a compositional bias: basic and acidic residues.

The protein localises to the nucleus. The sequence is that of U11/U12 small nuclear ribonucleoprotein 35 kDa protein (snrnp35) from Danio rerio (Zebrafish).